A 316-amino-acid polypeptide reads, in one-letter code: Acetaldehyde dehydrogenase (316 aa).

11 to 14 is an NAD(+) binding site; it reads SGNI. Residue Cys131 is the Acyl-thioester intermediate of the active site. NAD(+)-binding positions include 162–170 and Asn289; that span reads SAGPGTRAN.

Belongs to the acetaldehyde dehydrogenase family. In terms of assembly, interacts with MhpE.

The catalysed reaction is acetaldehyde + NAD(+) + CoA = acetyl-CoA + NADH + H(+). It participates in aromatic compound metabolism; 3-phenylpropanoate degradation. Functionally, catalyzes the conversion of acetaldehyde to acetyl-CoA, using NAD(+) and coenzyme A. Is the final enzyme in the meta-cleavage pathway for the degradation of aromatic compounds. The polypeptide is Acetaldehyde dehydrogenase (Klebsiella pneumoniae subsp. pneumoniae (strain ATCC 700721 / MGH 78578)).